Reading from the N-terminus, the 237-residue chain is ADTIVAVELDSYPNTDIGDPNYPHIGIDIKSIRSKSTARWNMQTGKVGTVHISYNSVAKRLSAVVSYTGSSSTTVSYDVDLNNVLPEWVRVGLSATTGLYKETNTILSWSFTSKLKTNSIADANSLHFTFNQFSQNPKDLILQGDATTDSDGNLELTKVSSSGDPQGNSVGRALFYAPVHIWEKSAVVASFDATFTFLIKSPDRDPADGITFFIANPDTSIPSGSGGRLLGLFPDAN.

The Mn(2+) site is built by E8 and D10. Residues D10, Y12, N14, and D19 each coordinate Ca(2+). A carbohydrate is bound at residue Y12. Residues D19, H24, and S34 each contribute to the Mn(2+) site. Residue 99–100 (LY) coordinates a carbohydrate. D208 serves as a coordination point for Ca(2+). R228 is an a carbohydrate binding site.

The protein belongs to the leguminous lectin family. As to quaternary structure, equilibrium between homodimer and homotetramer. Oligomerization is pH-dependent with homotetramers forming at pH 6.5 and above. In terms of processing, the beta and gamma chains are produced by partial proteolytic processing of the lectin alpha chain by an asparaginyl endopeptidase. Mixture of 60% alpha lectin and 40% of its beta and gamma proteolytic fragments. As to expression, seed.

The protein localises to the vacuole. It localises to the aleurone grain. D-mannose/D-glucose-binding lectin. Induces histamine release in mast cells from hamster and rat. Induces lymphocyte proliferation and IFNG production. This is Lectin alpha chain from Macropsychanthus bicolor (Dioclea rostrata).